A 180-amino-acid polypeptide reads, in one-letter code: tRNA (cytidine(56)-2'-O)-methyltransferase (180 aa).

Residues Leu85, 114–118, and 132–139 each bind S-adenosyl-L-methionine; these read GAEKV and VGNQPHSE.

The protein belongs to the aTrm56 family. Homodimer.

The protein resides in the cytoplasm. The enzyme catalyses cytidine(56) in tRNA + S-adenosyl-L-methionine = 2'-O-methylcytidine(56) in tRNA + S-adenosyl-L-homocysteine + H(+). Its function is as follows. Specifically catalyzes the AdoMet-dependent 2'-O-ribose methylation of cytidine at position 56 in tRNAs. The protein is tRNA (cytidine(56)-2'-O)-methyltransferase of Thermococcus kodakarensis (strain ATCC BAA-918 / JCM 12380 / KOD1) (Pyrococcus kodakaraensis (strain KOD1)).